Reading from the N-terminus, the 31-residue chain is Cytochrome b6-f complex subunit 6 (31 aa).

A helical transmembrane segment spans residues Ile-4 to Ser-26.

The protein belongs to the PetL family. As to quaternary structure, the 4 large subunits of the cytochrome b6-f complex are cytochrome b6, subunit IV (17 kDa polypeptide, PetD), cytochrome f and the Rieske protein, while the 4 small subunits are PetG, PetL, PetM and PetN. The complex functions as a dimer.

It localises to the plastid. Its subcellular location is the chloroplast thylakoid membrane. Component of the cytochrome b6-f complex, which mediates electron transfer between photosystem II (PSII) and photosystem I (PSI), cyclic electron flow around PSI, and state transitions. PetL is important for photoautotrophic growth as well as for electron transfer efficiency and stability of the cytochrome b6-f complex. In Illicium oligandrum (Star anise), this protein is Cytochrome b6-f complex subunit 6.